Consider the following 372-residue polypeptide: Glutamate 5-kinase (372 aa).

Residue Lys-14 coordinates ATP. Positions 54, 141, and 153 each coordinate substrate. 173-174 (TD) serves as a coordination point for ATP. The PUA domain maps to 280–358 (RGHVVIDAGA…GEIETVLGYM (79 aa)).

It belongs to the glutamate 5-kinase family.

The protein localises to the cytoplasm. It catalyses the reaction L-glutamate + ATP = L-glutamyl 5-phosphate + ADP. Its pathway is amino-acid biosynthesis; L-proline biosynthesis; L-glutamate 5-semialdehyde from L-glutamate: step 1/2. Functionally, catalyzes the transfer of a phosphate group to glutamate to form L-glutamate 5-phosphate. This is Glutamate 5-kinase from Burkholderia vietnamiensis (strain G4 / LMG 22486) (Burkholderia cepacia (strain R1808)).